A 240-amino-acid polypeptide reads, in one-letter code: Ribosome maturation protein SDO1 homolog (240 aa).

Belongs to the SDO1/SBDS family.

The protein is Ribosome maturation protein SDO1 homolog of Methanocaldococcus jannaschii (strain ATCC 43067 / DSM 2661 / JAL-1 / JCM 10045 / NBRC 100440) (Methanococcus jannaschii).